The chain runs to 385 residues: Spermidine/putrescine import ATP-binding protein PotA (385 aa).

The ABC transporter domain occupies 6 to 238; it reads IEFKNVSKVF…PINHFVATFI (233 aa). Residue 40–47 participates in ATP binding; that stretch reads GASGSGKS.

Belongs to the ABC transporter superfamily. Spermidine/putrescine importer (TC 3.A.1.11.1) family. In terms of assembly, the complex is composed of two ATP-binding proteins (PotA), two transmembrane proteins (PotB and PotC) and a solute-binding protein (PotD).

It localises to the cell membrane. The catalysed reaction is ATP + H2O + polyamine-[polyamine-binding protein]Side 1 = ADP + phosphate + polyamineSide 2 + [polyamine-binding protein]Side 1.. In terms of biological role, part of the ABC transporter complex PotABCD involved in spermidine/putrescine import. Responsible for energy coupling to the transport system. In Streptococcus pneumoniae serotype 4 (strain ATCC BAA-334 / TIGR4), this protein is Spermidine/putrescine import ATP-binding protein PotA.